Consider the following 83-residue polypeptide: Conotoxin Pu6.1 (83 aa).

A signal peptide spans 1–19 (MKLVLAIVLILMLVSLSTG). The propeptide occupies 20–42 (AEESGQEISMVGPPLYIWDPIPP). 3 cysteine pairs are disulfide-bonded: Cys-43-Cys-57, Cys-50-Cys-62, and Cys-56-Cys-78.

It belongs to the conotoxin I3 superfamily. In terms of tissue distribution, expressed by the venom duct.

Its subcellular location is the secreted. The protein is Conotoxin Pu6.1 of Conus pulicarius (Flea-bitten cone).